Consider the following 102-residue polypeptide: UPF0213 protein in potE 3'region (102 aa).

The GIY-YIG domain occupies 6–81 (SPWHLYMLRL…KQLSKTQKER (76 aa)).

Belongs to the UPF0213 family.

This Serratia liquefaciens protein is UPF0213 protein in potE 3'region.